The chain runs to 510 residues: NAD(P)H-quinone oxidoreductase subunit 2 A, chloroplastic (510 aa).

Helical transmembrane passes span 24–44, 59–79, 99–119, 124–144, 149–169, 183–203, 229–249, 295–315, 323–343, 354–374, 395–415, and 418–438; these read LLLF…GLIL, WFYF…LFRW, IFQF…VEYI, MAIT…MFLC, LITL…LSGY, YLLM…WLYG, ISIA…PAPF, WHLL…LIAI, MLAY…IVGD, YMLF…SFGL, ALSL…AGFF, and LHLF…IGLL.

Belongs to the complex I subunit 2 family. In terms of assembly, NDH is composed of at least 16 different subunits, 5 of which are encoded in the nucleus.

It is found in the plastid. The protein localises to the chloroplast thylakoid membrane. It carries out the reaction a plastoquinone + NADH + (n+1) H(+)(in) = a plastoquinol + NAD(+) + n H(+)(out). The enzyme catalyses a plastoquinone + NADPH + (n+1) H(+)(in) = a plastoquinol + NADP(+) + n H(+)(out). Its function is as follows. NDH shuttles electrons from NAD(P)H:plastoquinone, via FMN and iron-sulfur (Fe-S) centers, to quinones in the photosynthetic chain and possibly in a chloroplast respiratory chain. The immediate electron acceptor for the enzyme in this species is believed to be plastoquinone. Couples the redox reaction to proton translocation, and thus conserves the redox energy in a proton gradient. The sequence is that of NAD(P)H-quinone oxidoreductase subunit 2 A, chloroplastic from Dioscorea elephantipes (Elephant's foot yam).